The sequence spans 133 residues: MLLPDFLHQRFHSRPVRDVEDTIDKFVCTVFSLQRLQTSFRSCYAVDDAFIVLFDNSFHQLQANPTGGTCNQNNLAHIPSLTDYKLFLLLLFATALISCIPSSFSALSFLATLRKRSKSEKKREKTMRNSMLP.

Residues 91 to 113 (LFATALISCIPSSFSALSFLATL) traverse the membrane as a helical segment.

Its subcellular location is the membrane. This is an uncharacterized protein from Saccharomyces cerevisiae (strain ATCC 204508 / S288c) (Baker's yeast).